The primary structure comprises 77 residues: Acyl carrier protein (77 aa).

Residues 2-77 enclose the Carrier domain; the sequence is SDIADRVKKI…DAVKFISDAS (76 aa). Ser-37 is modified (O-(pantetheine 4'-phosphoryl)serine).

This sequence belongs to the acyl carrier protein (ACP) family. Post-translationally, 4'-phosphopantetheine is transferred from CoA to a specific serine of apo-ACP by AcpS. This modification is essential for activity because fatty acids are bound in thioester linkage to the sulfhydryl of the prosthetic group.

The protein localises to the cytoplasm. It functions in the pathway lipid metabolism; fatty acid biosynthesis. Carrier of the growing fatty acid chain in fatty acid biosynthesis. This Roseobacter denitrificans (strain ATCC 33942 / OCh 114) (Erythrobacter sp. (strain OCh 114)) protein is Acyl carrier protein.